Reading from the N-terminus, the 174-residue chain is Putative NADH dehydrogenase/NAD(P)H nitroreductase AF_2267 (174 aa).

107-112 (AARCLG) contributes to the NAD(+) binding site.

The protein belongs to the nitroreductase family. Requires FMN as cofactor.

The sequence is that of Putative NADH dehydrogenase/NAD(P)H nitroreductase AF_2267 from Archaeoglobus fulgidus (strain ATCC 49558 / DSM 4304 / JCM 9628 / NBRC 100126 / VC-16).